Reading from the N-terminus, the 1057-residue chain is Protein transport protein Sec16B (1057 aa).

Residues 1-15 (MELWVPQTQGRTTGP) are compositionally biased toward polar residues. The disordered stretch occupies residues 1–86 (MELWVPQTQG…VSGADYLKGS (86 aa)). Basic and acidic residues predominate over residues 45–63 (QDTHKNSKPQQDPRDDHQQ). Phosphoserine is present on residues Ser70, Ser137, Ser161, and Ser185. The disordered stretch occupies residues 185 to 220 (SAFGLEQPGEFFPESGAQKQKPSLTSKSNLLQQHES). Residues 201–213 (AQKQKPSLTSKSN) show a composition bias toward polar residues. A Phosphoserine modification is found at Ser245. The segment at 263–708 (APMRFYVPHV…KHKELEQTRT (446 aa)) is central conserved domain (CCD); required for localization to endoplasmic reticulum exit sites. Over residues 704–715 (EQTRTGDLRDPD) the composition is skewed to basic and acidic residues. Disordered stretches follow at residues 704-778 (EQTR…TYSE) and 849-1057 (AVIS…SQPC). Positions 737-764 (GQQNYSEDSEYSSALWPTSEQTSLTNPT) are enriched in polar residues. A Phosphothreonine modification is found at Thr856. 4 positions are modified to phosphoserine: Ser866, Ser869, Ser872, and Ser881. Basic and acidic residues predominate over residues 883 to 903 (GADKPPHPDASQKEKLRDGKN). Low complexity predominate over residues 906 to 926 (SSGFGWFSWFRSKPASSVSTS). The span at 927-938 (GDEDSVDSSDSE) shows a compositional bias: acidic residues. A compositionally biased stretch (gly residues) spans 990–999 (EGVGIGGFSG). Residues 1028 to 1043 (NPSQVPQLPTASSLNR) show a composition bias toward polar residues.

This sequence belongs to the SEC16 family. In terms of assembly, SEC16A and SEC16B are each present in multiple copies in a heteromeric complex. Interacts with TFG. Interacts with SEC13. As to expression, liver, kidney, heart, spleen and brain.

The protein resides in the endoplasmic reticulum membrane. Its subcellular location is the golgi apparatus membrane. Plays a role in the organization of the endoplasmic reticulum exit sites (ERES), also known as transitional endoplasmic reticulum (tER). Required for secretory cargo traffic from the endoplasmic reticulum to the Golgi apparatus. Involved in peroxisome biogenesis. Regulates the transport of peroxisomal biogenesis factors PEX3 and PEX16 from the ER to peroxisomes. The chain is Protein transport protein Sec16B (Sec16b) from Rattus norvegicus (Rat).